Reading from the N-terminus, the 520-residue chain is Na(+)/H(+) antiporter NhaB (520 aa).

The next 12 membrane-spanning stretches (helical) occupy residues 27–49, 62–82, 97–117, 120–140, 144–164, 202–222, 238–258, 303–323, 348–368, 391–411, 447–467, and 475–495; these read GFLI…LLVI, YPLL…MTSA, LLLI…LLIF, LLLG…AAAF, FLDA…FYGI, LMMH…VGEP, FLLR…VTCI, GLIG…VGLI, TEAL…AVII, LFYL…VGTV, ATPN…APLI, and VWMA…CVQF.

It belongs to the NhaB Na(+)/H(+) (TC 2.A.34) antiporter family.

Its subcellular location is the cell inner membrane. The enzyme catalyses 2 Na(+)(in) + 3 H(+)(out) = 2 Na(+)(out) + 3 H(+)(in). In terms of biological role, na(+)/H(+) antiporter that extrudes sodium in exchange for external protons. The sequence is that of Na(+)/H(+) antiporter NhaB from Cronobacter sakazakii (strain ATCC BAA-894) (Enterobacter sakazakii).